The following is a 438-amino-acid chain: PHAF1 protein CG7083 (438 aa).

Belongs to the PHAF1 family.

Its subcellular location is the cytoplasm. The protein localises to the preautophagosomal structure. Its function is as follows. May play a regulatory role in autophagic activity. The chain is PHAF1 protein CG7083 from Drosophila melanogaster (Fruit fly).